Reading from the N-terminus, the 663-residue chain is Cytoplasmic dynein 1 intermediate chain (663 aa).

Over residues 17-37 (LREEKDRRRREKEIKDMEEAA) the composition is skewed to basic and acidic residues. Disordered regions lie at residues 17-52 (LREE…DQRK) and 75-107 (SVNS…KKQP). Residues 75–85 (SVNSMTSDNSN) are compositionally biased toward low complexity. Residues 86–99 (TQTPDASLQATVNG) are compositionally biased toward polar residues. WD repeat units follow at residues 311–360 (SKNR…STPE), 364–404 (HCQS…RTPI), 413–454 (AHTH…QPQD), 463–503 (SKAI…SGVN), 508–553 (RHLG…PLYS), 556–596 (DNSD…EVPT), and 602–641 (AGAP…AQPS).

The protein belongs to the dynein intermediate chain family. In terms of assembly, homodimer. The cytoplasmic dynein 1 complex consists of two catalytic heavy chains (HCs) and a number of non-catalytic subunits presented by intermediate chains (ICs), light intermediate chains (LICs) and light chains (LCs). High levels of isoform 1b, isoform 1c, isoform 3a and isoform 4 accumulate in early egg chambers and at stage 9 become concentrated at the posterior of the oocyte. Isoform 5a and isoform 5b are highly expressed in adult head and to a lesser extent in adult torso. Isoform 1a, isoform 2a and isoform 2b are found in all tissues examined, including ovaries, midgut, torso and head.

It localises to the cytoplasm. It is found in the cytoskeleton. The protein resides in the lysosome membrane. The protein localises to the nucleus membrane. Acts as one of several non-catalytic accessory components of the cytoplasmic dynein 1 complex that are thought to be involved in linking dynein to cargos and to adapter proteins that regulate dynein function. Cytoplasmic dynein 1 acts as a motor for the intracellular retrograde motility of vesicles and organelles along microtubules. The intermediate chains mediate the help dynein bind to dynactin 150 kDa component. This Drosophila melanogaster (Fruit fly) protein is Cytoplasmic dynein 1 intermediate chain (sw).